The chain runs to 96 residues: Aspartyl/glutamyl-tRNA(Asn/Gln) amidotransferase subunit C (96 aa).

The interval 64-96 is disordered; the sequence is REDEPEPGLPREEVLKNAPDQQDGQFRVPAILE.

This sequence belongs to the GatC family. As to quaternary structure, heterotrimer of A, B and C subunits.

The catalysed reaction is L-glutamyl-tRNA(Gln) + L-glutamine + ATP + H2O = L-glutaminyl-tRNA(Gln) + L-glutamate + ADP + phosphate + H(+). The enzyme catalyses L-aspartyl-tRNA(Asn) + L-glutamine + ATP + H2O = L-asparaginyl-tRNA(Asn) + L-glutamate + ADP + phosphate + 2 H(+). Its function is as follows. Allows the formation of correctly charged Asn-tRNA(Asn) or Gln-tRNA(Gln) through the transamidation of misacylated Asp-tRNA(Asn) or Glu-tRNA(Gln) in organisms which lack either or both of asparaginyl-tRNA or glutaminyl-tRNA synthetases. The reaction takes place in the presence of glutamine and ATP through an activated phospho-Asp-tRNA(Asn) or phospho-Glu-tRNA(Gln). The chain is Aspartyl/glutamyl-tRNA(Asn/Gln) amidotransferase subunit C from Geobacillus thermodenitrificans (strain NG80-2).